Consider the following 258-residue polypeptide: MSNLYTERVLSVHHWNDTLFSFKTTRNPGLRFKTGQFVMIGLEVDGRPLMRAYSIASPNYEEHLEFFSIKVPDGPLTSRLQHLKEGDELMVSRKPTGTLVHDDLLPGKHLYLLSTGTGMAPFLSVIQDPETYERYEKVILVHGVRWVSELAYADFITKVLPEHEYFGDQVKEKLIYYPLVTREPFRNQGRQTDLMRSGKLFEDIGLPPMNPQDDRAMICGSPSMLEETSAVLDSFGLKISPRMGEPGDYLIERAFVEK.

The region spanning 2–102 (SNLYTERVLS…RKPTGTLVHD (101 aa)) is the FAD-binding FR-type domain. Arg51, Ala52, Tyr53, Ser54, Phe67, Ile69, Leu76, Thr77, and Thr117 together coordinate FAD. Residues Val144, Arg145, Thr181, Arg182, Arg190, Ser223, Glu227, Phe255, and Glu257 each coordinate NADP(+). Phe255, Glu257, and Lys258 together coordinate FAD.

This sequence belongs to the ferredoxin--NADP reductase type 1 family. Monomer. It depends on FAD as a cofactor.

The enzyme catalyses 2 reduced [2Fe-2S]-[ferredoxin] + NADP(+) + H(+) = 2 oxidized [2Fe-2S]-[ferredoxin] + NADPH. Its function is as follows. Transports electrons between ferredoxin and NADPH. Provides electrons to heme oxygenase (pigA) allowing anaerobic heme degradation. Provides electrons necessary to reduce and mobilize Fe(3+) in a heterooligomeric bacterioferritin (BFR) complex to Fe(2+). Reduction of Fe(3+) in a pure FtnA BFR does not require Bfd. Reduction of Fe(3+) in a pure BfrB BFR does require Bfd. This is Ferredoxin--NADP reductase from Pseudomonas aeruginosa (strain ATCC 15692 / DSM 22644 / CIP 104116 / JCM 14847 / LMG 12228 / 1C / PRS 101 / PAO1).